Here is a 3801-residue protein sequence, read N- to C-terminus: Lysosomal-trafficking regulator (3801 aa).

The disordered stretch occupies residues K148–D173. S164 is modified (phosphoserine). T165 carries the post-translational modification Phosphothreonine. Phosphoserine is present on S166. Residues E662–V700 form a WD 1 repeat. Residues A1181–A1190 show a composition bias toward basic and acidic residues. Disordered stretches follow at residues A1181–E1203 and Y1221–D1256. Over residues Y1221–G1238 the composition is skewed to acidic residues. The span at E1246 to D1256 shows a compositional bias: polar residues. Phosphoserine is present on residues S1509 and S1510. Residues S1582–T1626 form a WD 2 repeat. S2105, S2124, S2213, S2217, and S2264 each carry phosphoserine. The span at K2205 to D2215 shows a compositional bias: basic and acidic residues. Residues K2205–P2224 form a disordered region. A BEACH-type PH domain is found at A3009–L3115. Positions P3120–R3422 constitute a BEACH domain. WD repeat units follow at residues S3563–S3602, G3614–S3653, G3656–V3699, H3700–E3744, and K3749–Q3788.

In terms of assembly, interacts with CPAP, LIP8 and ZNF521. As to expression, abundantly expressed in adult and fetal thymus, peripheral blood leukocytes, bone marrow and several regions of the adult brain.

The protein resides in the cytoplasm. Adapter protein that regulates and/or fission of intracellular vesicles such as lysosomes. Might regulate trafficking of effectors involved in exocytosis. In cytotoxic T-cells and natural killer (NK) cells, has role in the regulation of size, number and exocytosis of lytic granules. In macrophages and dendritic cells, regulates phagosome maturation by controlling the conversion of early phagosomal compartments into late phagosomes. In macrophages and dendritic cells, specifically involved in TLR3- and TLR4-induced production of pro-inflammatory cytokines by regulating the endosomal TLR3- TICAM1/TRIF and TLR4- TICAM1/TRIF signaling pathways. The protein is Lysosomal-trafficking regulator (LYST) of Homo sapiens (Human).